A 484-amino-acid polypeptide reads, in one-letter code: Sperm motility kinase Tcr mutant form (484 aa).

The 249-residue stretch at 8 to 256 folds into the Protein kinase domain; the sequence is YEMLETIGQG…VAEVMVHPWV (249 aa). ATP contacts are provided by residues 14 to 22 and lysine 37; that span reads IGQGGCAQV. Catalysis depends on aspartate 127, which acts as the Proton acceptor. Disordered regions lie at residues 355–400 and 426–446; these read EPTG…TMDQ and STEG…RGWP. The segment covering 391–400 has biased composition (polar residues); sequence PINTTPTMDQ.

Belongs to the protein kinase superfamily. Tyr protein kinase family. Smok subfamily. As to expression, testis-specific. Expressed in the testis from 22 days postpartum (22 dpp). Expressed late in spermiogenesis, only in Tcr-containing t-haplotypes.

It catalyses the reaction L-seryl-[protein] + ATP = O-phospho-L-seryl-[protein] + ADP + H(+). The enzyme catalyses L-threonyl-[protein] + ATP = O-phospho-L-threonyl-[protein] + ADP + H(+). Its function is as follows. While the main function of Smoks is to control sperm motility, the role of Smok-Tcr, with reduced kinase activity, is to counterbalance a signaling impairment caused by the distorter/sterility loci, giving t-sperm an advantage in reaching the oocytes. Transmission ratio distortion also called segregation distortion is the name given to the phenomenon above-mentioned. Being associated with the T-complex, it allows males heterozygous for a complete t-haplotype to preferentially transmit the t-haplotype chromosome. In Mus musculus (Mouse), this protein is Sperm motility kinase Tcr mutant form (Smoktcr).